Here is a 127-residue protein sequence, read N- to C-terminus: Stationary phase protein 3 (127 aa).

The next 2 helical transmembrane spans lie at 29-49 and 63-83; these read LFLF…FYVI and ANSI…CFFL. N-linked (GlcNAc...) asparagine glycosylation is present at asparagine 86.

It localises to the membrane. In terms of biological role, required for survival during stationary phase. This Saccharomyces cerevisiae (strain ATCC 204508 / S288c) (Baker's yeast) protein is Stationary phase protein 3 (SPG3).